The following is a 239-amino-acid chain: RNA chaperone ProQ (239 aa).

The tract at residues 107 to 177 (KARVQAQRAE…RKPVAKPVQA (71 aa)) is disordered. Over residues 115 to 137 (AEQRAKKREAENVAAGEKNERPT) the composition is skewed to basic and acidic residues.

The protein belongs to the ProQ family.

Its subcellular location is the cytoplasm. RNA chaperone with significant RNA binding, RNA strand exchange and RNA duplexing activities. May regulate ProP activity through an RNA-based, post-transcriptional mechanism. The protein is RNA chaperone ProQ of Photorhabdus laumondii subsp. laumondii (strain DSM 15139 / CIP 105565 / TT01) (Photorhabdus luminescens subsp. laumondii).